A 209-amino-acid polypeptide reads, in one-letter code: Uracil phosphoribosyltransferase (209 aa).

5-phospho-alpha-D-ribose 1-diphosphate is bound by residues Arg-79, Arg-104, and 131–139 (DPMLATGNS). Uracil-binding positions include Ile-194 and 199–201 (GDA). Asp-200 serves as a coordination point for 5-phospho-alpha-D-ribose 1-diphosphate.

The protein belongs to the UPRTase family. It depends on Mg(2+) as a cofactor.

It carries out the reaction UMP + diphosphate = 5-phospho-alpha-D-ribose 1-diphosphate + uracil. It functions in the pathway pyrimidine metabolism; UMP biosynthesis via salvage pathway; UMP from uracil: step 1/1. Allosterically activated by GTP. Its function is as follows. Catalyzes the conversion of uracil and 5-phospho-alpha-D-ribose 1-diphosphate (PRPP) to UMP and diphosphate. In Rhizobium rhizogenes (strain K84 / ATCC BAA-868) (Agrobacterium radiobacter), this protein is Uracil phosphoribosyltransferase.